Reading from the N-terminus, the 160-residue chain is UPF0260 protein GDI1595/Gdia_1801 (160 aa).

This sequence belongs to the UPF0260 family.

This Gluconacetobacter diazotrophicus (strain ATCC 49037 / DSM 5601 / CCUG 37298 / CIP 103539 / LMG 7603 / PAl5) protein is UPF0260 protein GDI1595/Gdia_1801.